The primary structure comprises 260 residues: tRNA pseudouridine synthase A (260 aa).

Aspartate 51 functions as the Nucleophile in the catalytic mechanism. Tyrosine 109 serves as a coordination point for substrate.

This sequence belongs to the tRNA pseudouridine synthase TruA family. Homodimer.

It catalyses the reaction uridine(38/39/40) in tRNA = pseudouridine(38/39/40) in tRNA. In terms of biological role, formation of pseudouridine at positions 38, 39 and 40 in the anticodon stem and loop of transfer RNAs. The protein is tRNA pseudouridine synthase A of Methylibium petroleiphilum (strain ATCC BAA-1232 / LMG 22953 / PM1).